Here is a 60-residue protein sequence, read N- to C-terminus: MATKTVKVTQTKSAIGRLPKHRATLTGLGLRRIGHTVELEDTPSVRGMINKVYYMVKVED.

The protein belongs to the universal ribosomal protein uL30 family. Part of the 50S ribosomal subunit.

The chain is Large ribosomal subunit protein uL30 from Shewanella sp. (strain ANA-3).